The following is a 188-amino-acid chain: MKQQANLIRAGQVIEHDGRRWTVLKQQIITPGKGGAFIQVEMRDLKTGNKTNERWRTADTVERLLTEEKEYTYSYMDGDNIVLMDPETFEQTLLPLDLLGDQAPFLQDNMVLVVNLVEGDPVGVTLPAQVTLEIIEADPVVKGQTASSSYKPAKLSNGVKTMVPPFIEAGERIVVRTEDASYVERAKG.

This sequence belongs to the elongation factor P family.

It localises to the cytoplasm. Its pathway is protein biosynthesis; polypeptide chain elongation. Functionally, involved in peptide bond synthesis. Stimulates efficient translation and peptide-bond synthesis on native or reconstituted 70S ribosomes in vitro. Probably functions indirectly by altering the affinity of the ribosome for aminoacyl-tRNA, thus increasing their reactivity as acceptors for peptidyl transferase. This chain is Elongation factor P, found in Gluconacetobacter diazotrophicus (strain ATCC 49037 / DSM 5601 / CCUG 37298 / CIP 103539 / LMG 7603 / PAl5).